Here is a 520-residue protein sequence, read N- to C-terminus: Laccase (520 aa).

Residues 1 to 21 (MHTFLRSTALVVAGLSARALA) form the signal peptide. 2 consecutive Plastocyanin-like domains span residues 22–148 (SIGP…FVVY) and 160–304 (VDDD…ILRY). Asn-75 carries an N-linked (GlcNAc...) asparagine glycan. 4 residues coordinate Cu cation: His-85, His-87, His-130, and His-132. 2 cysteine pairs are disulfide-bonded: Cys-106–Cys-509 and Cys-138–Cys-227. Asn-352 and Asn-402 each carry an N-linked (GlcNAc...) asparagine glycan. Residues 373-496 (TVPVLLQILS…VFAEDIPDVA (124 aa)) form the Plastocyanin-like 3 domain. Positions 418, 421, 423, 473, 474, 475, and 479 each coordinate Cu cation.

The protein belongs to the multicopper oxidase family. Cu cation serves as cofactor.

The protein localises to the secreted. It catalyses the reaction 4 hydroquinone + O2 = 4 benzosemiquinone + 2 H2O. Lignin degradation and detoxification of lignin-derived products. This is Laccase (LAC) from Phlebia radiata (White-rot fungus).